The sequence spans 342 residues: Transmembrane protein 268 (342 aa).

The next 2 membrane-spanning stretches (helical) occupy residues Ala-106–Phe-126 and Ala-133–Phe-153. Positions Val-245–Pro-267 are disordered.

As to quaternary structure, interacts with ITGAM; this interaction inhibits ITGAM degradation via the endosome-lysosome pathway. Interacts with ITGB4; this interaction prevents ITGB4 degradation.

The protein resides in the cell membrane. Functionally, stabilizes cell surface expression of ITGAM and participates in the adhesion and migration of phagocytes during bacterial clearance. This Mus musculus (Mouse) protein is Transmembrane protein 268.